A 111-amino-acid polypeptide reads, in one-letter code: UPF0060 membrane protein XCC2880 (111 aa).

The next 4 helical transmembrane spans lie at 8-28 (LLLF…PYLW), 34-54 (SVWL…LLTL), 62-82 (VYAA…WWVD), and 91-111 (LLGA…PRSG).

Belongs to the UPF0060 family.

It localises to the cell inner membrane. This chain is UPF0060 membrane protein XCC2880, found in Xanthomonas campestris pv. campestris (strain ATCC 33913 / DSM 3586 / NCPPB 528 / LMG 568 / P 25).